Here is a 627-residue protein sequence, read N- to C-terminus: UvrABC system protein C (627 aa).

The 80-residue stretch at 26–105 (PSPGVYQFRN…IKELKPRYNV (80 aa)) folds into the GIY-YIG domain. Positions 219–254 (STMIRSLTSAMQLFARELKFERAAEIKMQLESLKRY) constitute a UVR domain.

It belongs to the UvrC family. In terms of assembly, interacts with UvrB in an incision complex.

It localises to the cytoplasm. The UvrABC repair system catalyzes the recognition and processing of DNA lesions. UvrC both incises the 5' and 3' sides of the lesion. The N-terminal half is responsible for the 3' incision and the C-terminal half is responsible for the 5' incision. This Pelodictyon phaeoclathratiforme (strain DSM 5477 / BU-1) protein is UvrABC system protein C.